Consider the following 379-residue polypeptide: Putative phosphatidate phosphatase (379 aa).

The tract at residues 1 to 53 is disordered; it reads MPAVKIIMSTETSASETTPLRRSENETPDHKELAQSNSNSRQTTVNSNNNNYS. The span at 9–18 shows a compositional bias: polar residues; that stretch reads STETSASETT. Basic and acidic residues predominate over residues 19 to 33; that stretch reads PLRRSENETPDHKEL. Positions 35–53 are enriched in low complexity; it reads QSNSNSRQTTVNSNNNNYS. Residue Asn51 is glycosylated (N-linked (GlcNAc...) asparagine). Transmembrane regions (helical) follow at residues 90-110 and 138-158; these read VGLD…FFLL and MLYF…EVII. N-linked (GlcNAc...) asparagine glycosylation occurs at Asn169. 2 helical membrane passes run 266–286 and 330–350; these read SFPS…ALYL and AGSL…SDLF.

The protein belongs to the PA-phosphatase related phosphoesterase family. As to quaternary structure, homodimer. This complex seems not to be involved in substrate recognition, it may confer only structural or functional stability. In terms of tissue distribution, expressed in embryonic gut in a pattern that guides germ cells towards mesoderm (initially in hindgut and then on lower side of gut). During extended germ band stage, expressed in ectoderm as a medial band throughout the trunk.

Its subcellular location is the membrane. The catalysed reaction is a 1,2-diacyl-sn-glycero-3-phosphate + H2O = a 1,2-diacyl-sn-glycerol + phosphate. In terms of biological role, responsible for guiding the germ cells early in the process of migration from the lumen of the developing gut towards the overlying mesoderm, where the germ cells enter the gonads. May be involved in lipid metabolism. This Drosophila melanogaster (Fruit fly) protein is Putative phosphatidate phosphatase (wun).